Reading from the N-terminus, the 1213-residue chain is Protein jagged-1b (1213 aa).

Residues 1 to 26 (MILRRSSVFSAFYLHAFLLCLRTTVS) form the signal peptide. At 27–1064 (DASGHFELEI…HQIPSPKTDY (1038 aa)) the chain is on the extracellular side. An N-linked (GlcNAc...) asparagine glycan is attached at N139. The region spanning 182 to 226 (VTCLEHYYGFGCNKFCRPRDEFFGHYTCDQNGNKTCLEGWTGPDC) is the DSL domain. Cystine bridges form between C184/C193 and C197/C209. N-linked (GlcNAc...) asparagine glycosylation occurs at N214. 39 disulfide bridges follow: C217-C226, C231-C242, C235-C248, C250-C259, C262-C273, C268-C279, C281-C290, C297-C309, C303-C319, C321-C330, C337-C348, C342-C357, C359-C368, C375-C386, C380-C395, C397-C406, C413-C424, C418-C433, C435-C444, C451-C461, C455-C470, C472-C481, C488-C499, C493-C508, C510-C519, C526-C537, C531-C546, C548-C557, C596-C612, C614-C623, C630-C641, C635-C650, C652-C661, C668-C679, C673-C688, C690-C699, C706-C717, C711-C726, and C728-C737. The EGF-like 1 domain occupies 227-260 (NTAICRQGCSTEHGSCKQPGGCKCLYGWQGPYCD). The EGF-like 2; atypical domain maps to 261 to 291 (KCIPHPGCVHGTCVEPWQCLCDTNWGGQLCD). 2 consecutive EGF-like domains span residues 293–331 (DLNYCGTHQPCLNGGTCSNTGPDKYQCSCEDGYSGVNCE) and 333–369 (AEHACLSNPCANGGTCKETSQGYECHCAIGWSGTSCE). One can recognise an EGF-like 5; calcium-binding domain in the interval 371–407 (NVDDCTPNQCKHGGTCQDLVNGFKCACPPHWTGKTCQ). The EGF-like 6; calcium-binding domain maps to 409-445 (DANECEDKPCVNAKSCHNLIGAYFCECLPGWSGQNCD). The 36-residue stretch at 447 to 482 (NINDCKGQCLNGGTCKDLVNGYRCLCPPGYTGEQCE) folds into the EGF-like 7; calcium-binding domain. The 37-residue stretch at 484–520 (DVDECASSPCLNGGRCQDEVNGFQCLCPAGFSGQLCQ) folds into the EGF-like 8; calcium-binding domain. 2 EGF-like domains span residues 522-558 (DIDYCKPNPCQNGAQCFNLASDYFCKCPDDYEGKNCS) and 592-624 (SSNVCGPHGRCRSQAGGQFTCECQEGFRGTYCH). N556 is a glycosylation site (N-linked (GlcNAc...) asparagine). An EGF-like 11; calcium-binding domain is found at 626–662 (NINDCESNPCRNGGTCIDKVNVYQCICADGWEGVHCE). Residues 664 to 700 (NIDDCSLNPCLNKGACQDLVNDFYCECRNGWKGKTCH) form the EGF-like 12; calcium-binding domain. In terms of domain architecture, EGF-like 13 spans 702-738 (RDSQCDEATCNNGGTCHDEGDTFKCRCSPGWEGATCN). Residue N742 is glycosylated (N-linked (GlcNAc...) asparagine). Disulfide bonds link C745–C756, C750–C765, C767–C776, C783–C794, C788–C803, C805–C814, C821–C832, C826–C841, and C843–C852. One can recognise an EGF-like 14 domain in the interval 746–777 (LPNPCENGGTCVVNGDSFNCVCKEGWEGSTCT). Positions 779–815 (NTNDCNPHPCYNSGTCVDGENWYRCECAPGFAGPDCR) constitute an EGF-like 15; calcium-binding domain. The region spanning 817–853 (NINECQSSPCAFGSTCVDEINGYRCLCPPGRIGPDCQ) is the EGF-like 16; calcium-binding domain. The region spanning 860 to 914 (CIANGQVTADGAKWEEDCNICQCQNGRIHCTMMWCGPKSCRIGKARGGCPASQSC) is the VWFC domain. The region spanning 918–956 (KEEQCFVKPCPSLGECWPSAPPPPSKCHASFSYQDDSCA) is the EGF-like 17 domain. N-linked (GlcNAc...) asparagine glycosylation is found at N957, N988, and N1042. A helical transmembrane segment spans residues 1065-1087 (LVPLLSSIFIVLWIFALASAFLW). At 1088 to 1213 (CIHRRRKQNT…QSLNRMEYIV (126 aa)) the chain is on the cytoplasmic side. The segment at 1181 to 1202 (EERAPNKNPNWTNKQDNRDLET) is disordered.

It localises to the membrane. It is found in the cell membrane. Ligand for Notch receptors and involved in the mediation of Notch signaling. Seems to be involved in cell-fate decisions. The polypeptide is Protein jagged-1b (jag1b) (Danio rerio (Zebrafish)).